The primary structure comprises 799 residues: Pentatricopeptide repeat-containing protein At2g26790, mitochondrial (799 aa).

Residues 1–27 constitute a mitochondrion transit peptide; sequence MRFSPTFFLLSQLRLTRRRAATSSRFY. PPR repeat units follow at residues 145–179, 180–214, 215–250, 251–278, 282–316, 317–351, 352–386, 387–421, 422–456, 457–491, 492–522, 523–553, 555–589, 590–624, 625–659, 660–695, 708–742, and 743–777; these read LIRV…DCVV, DIKA…GLCA, NEYT…GYKT, FING…KYLA, LRAV…GFGL, DVYA…GLKV, NCVI…NIFL, DRVC…GIVP, DVIN…GMSP, DLIT…GPKP, NAVT…LEQK, CPEN…LEYP, RKSV…RVEP, GRSM…GLIP, DLFT…GIKP, DVVT…KASE, DVVC…GLEP, and DMVA…YNIP.

The protein belongs to the PPR family. P subfamily.

It is found in the mitochondrion. This chain is Pentatricopeptide repeat-containing protein At2g26790, mitochondrial, found in Arabidopsis thaliana (Mouse-ear cress).